The following is a 172-amino-acid chain: Peroxiredoxin AHP1 (172 aa).

The Thioredoxin domain occupies 4-171; sequence LQPGDSFPAN…VLTVLGNQGK (168 aa). Residue K44 forms a Glycyl lysine isopeptide (Lys-Gly) (interchain with G-Cter in URM1) linkage. The Cysteine sulfenic acid (-SOH) intermediate role is filled by C60. C60 is modified (cysteine persulfide). Residues K63, K99, K141, K156, and K171 each participate in a glycyl lysine isopeptide (Lys-Gly) (interchain with G-Cter in URM1) cross-link.

Belongs to the peroxiredoxin family. Prx5 subfamily. Homodimer; disulfide-linked, upon oxidation. In terms of processing, conjugated to URM1, a ubiquitin-like protein, in response to oxidative stresses. The attachment of URM1 to lysine residues exclusively depends on the presence of a peroxidatic cysteine in the target protein, with low specificity for the particular residue, motif, or structural context at which urmylation can occur. The URM1-conjugation reaction is mechanistically and directly coupled to the process of cysteine persulfidation, transfering the sulfur atom of the URM1 thiocarboxyl group to redox-active cysteine residues in the target protein if it is exposed to oxidative conditions. Persulfidated on specific redox-active cysteine residues. Persulfidation (also called protein S-sulfhydration) may provide a molecular mechanism that enables cells to protect vulnerable cysteine residues from reactive oxygen species (ROS) under stress conditions.

It localises to the cytoplasm. It carries out the reaction a hydroperoxide + [thioredoxin]-dithiol = an alcohol + [thioredoxin]-disulfide + H2O. In terms of biological role, thiol-specific peroxidase that catalyzes the reduction of hydrogen peroxide and organic hydroperoxides to water and alcohols, respectively. Plays a role in cell protection against oxidative stress by detoxifying peroxides and as sensor of hydrogen peroxide-mediated signaling events. Preferentially eliminates organic peroxides rather than hydrogen peroxide. Relays alkyl hydroperoxides as a signal to the transcription factor CAD1/YAP2 by inducing the formation of intramolecular disulfide bonds in CAD1, which causes its nuclear accumulation and activation. Involved in cellular Mn(2+) homeostasis. In Chaetomium thermophilum (strain DSM 1495 / CBS 144.50 / IMI 039719) (Thermochaetoides thermophila), this protein is Peroxiredoxin AHP1 (AHP1).